Here is a 190-residue protein sequence, read N- to C-terminus: Large ribosomal subunit protein eL19 (190 aa).

2 disordered regions span residues 56-85 (TVHS…KGTK) and 166-190 (NRAA…EAAN). The segment covering 72-83 (AGRHMGYGKRKG) has biased composition (basic residues). Residues 166–184 (NRAARERRQQRLAEKKEAL) are compositionally biased toward basic and acidic residues.

It belongs to the eukaryotic ribosomal protein eL19 family. Component of the large ribosomal subunit. Mature ribosomes consist of a small (40S) and a large (60S) subunit. The 40S subunit contains about 32 different proteins and 1 molecule of RNA (18S). The 60S subunit contains 45 different proteins and 3 molecules of RNA (25S, 5.8S and 5S).

The protein localises to the cytoplasm. Functionally, component of the ribosome, a large ribonucleoprotein complex responsible for the synthesis of proteins in the cell. The small ribosomal subunit (SSU) binds messenger RNAs (mRNAs) and translates the encoded message by selecting cognate aminoacyl-transfer RNA (tRNA) molecules. The large subunit (LSU) contains the ribosomal catalytic site termed the peptidyl transferase center (PTC), which catalyzes the formation of peptide bonds, thereby polymerizing the amino acids delivered by tRNAs into a polypeptide chain. The nascent polypeptides leave the ribosome through a tunnel in the LSU and interact with protein factors that function in enzymatic processing, targeting, and the membrane insertion of nascent chains at the exit of the ribosomal tunnel. RPL19A may play a role in the last stages of translation initiation, in particular subunit joining and shedding/releasing factors. The protein is Large ribosomal subunit protein eL19 of Candida albicans (strain SC5314 / ATCC MYA-2876) (Yeast).